The chain runs to 203 residues: Pectinesterase inhibitor 12 (203 aa).

The N-terminal stretch at 1–26 is a signal peptide; the sequence is MRMSKALAAVVAISVSLSAAAMGVDA. 2 cysteine pairs are disulfide-bonded: C32-C47 and C100-C140.

The protein belongs to the PMEI family.

The protein localises to the secreted. It localises to the extracellular space. The protein resides in the apoplast. Functionally, pectin methylesterase (PME) inhibitor that inhibits PME in vitro. This is Pectinesterase inhibitor 12 from Oryza sativa subsp. japonica (Rice).